The sequence spans 283 residues: 4-diphosphocytidyl-2-C-methyl-D-erythritol kinase (283 aa).

Lysine 10 is a catalytic residue. 95–105 is an ATP binding site; that stretch reads PVAAGLGGGSS. The active site involves aspartate 137.

The protein belongs to the GHMP kinase family. IspE subfamily.

The enzyme catalyses 4-CDP-2-C-methyl-D-erythritol + ATP = 4-CDP-2-C-methyl-D-erythritol 2-phosphate + ADP + H(+). It functions in the pathway isoprenoid biosynthesis; isopentenyl diphosphate biosynthesis via DXP pathway; isopentenyl diphosphate from 1-deoxy-D-xylulose 5-phosphate: step 3/6. In terms of biological role, catalyzes the phosphorylation of the position 2 hydroxy group of 4-diphosphocytidyl-2C-methyl-D-erythritol. This is 4-diphosphocytidyl-2-C-methyl-D-erythritol kinase from Limosilactobacillus reuteri (strain DSM 20016) (Lactobacillus reuteri).